The primary structure comprises 320 residues: ATP phosphoribosyltransferase (320 aa).

Belongs to the ATP phosphoribosyltransferase family. Long subfamily. The cofactor is Mg(2+).

The protein resides in the cytoplasm. It carries out the reaction 1-(5-phospho-beta-D-ribosyl)-ATP + diphosphate = 5-phospho-alpha-D-ribose 1-diphosphate + ATP. Its pathway is amino-acid biosynthesis; L-histidine biosynthesis; L-histidine from 5-phospho-alpha-D-ribose 1-diphosphate: step 1/9. Feedback inhibited by histidine. Functionally, catalyzes the condensation of ATP and 5-phosphoribose 1-diphosphate to form N'-(5'-phosphoribosyl)-ATP (PR-ATP). Has a crucial role in the pathway because the rate of histidine biosynthesis seems to be controlled primarily by regulation of HisG enzymatic activity. The protein is ATP phosphoribosyltransferase (hisG) of Caulobacter vibrioides (strain ATCC 19089 / CIP 103742 / CB 15) (Caulobacter crescentus).